A 408-amino-acid chain; its full sequence is Succinylornithine transaminase (408 aa).

K252 bears the N6-(pyridoxal phosphate)lysine mark.

This sequence belongs to the class-III pyridoxal-phosphate-dependent aminotransferase family. AstC subfamily. Pyridoxal 5'-phosphate serves as cofactor.

The catalysed reaction is N(2)-succinyl-L-ornithine + 2-oxoglutarate = N-succinyl-L-glutamate 5-semialdehyde + L-glutamate. The protein operates within amino-acid degradation; L-arginine degradation via AST pathway; L-glutamate and succinate from L-arginine: step 3/5. Functionally, catalyzes the transamination of N(2)-succinylornithine and alpha-ketoglutarate into N(2)-succinylglutamate semialdehyde and glutamate. Can also act as an acetylornithine aminotransferase. This chain is Succinylornithine transaminase, found in Salmonella heidelberg (strain SL476).